The primary structure comprises 613 residues: Probable potassium transport system protein Kup (613 aa).

11 helical membrane-spanning segments follow: residues 38 to 58 (VLGV…LKYL), 91 to 111 (WILV…GMIT), 128 to 148 (PSFG…LFLF), 159 to 179 (FFGP…LVEI), 206 to 226 (FLVL…YADM), 238 to 258 (WSLL…AVLL), 270 to 290 (ALVP…ATII), 328 to 348 (IYVP…VAGF), 357 to 377 (AYGV…YYVA), 387 to 407 (GLNL…GASV), and 410 to 430 (LFHG…LMLT).

It belongs to the HAK/KUP transporter (TC 2.A.72) family.

It is found in the cell inner membrane. The enzyme catalyses K(+)(in) + H(+)(in) = K(+)(out) + H(+)(out). In terms of biological role, transport of potassium into the cell. Likely operates as a K(+):H(+) symporter. This is Probable potassium transport system protein Kup from Chlorobaculum tepidum (strain ATCC 49652 / DSM 12025 / NBRC 103806 / TLS) (Chlorobium tepidum).